Reading from the N-terminus, the 433-residue chain is Trigger factor (433 aa).

The region spanning 161 to 246 (EDRATIDFTG…LKKVEERELP (86 aa)) is the PPIase FKBP-type domain.

This sequence belongs to the FKBP-type PPIase family. Tig subfamily.

It is found in the cytoplasm. The catalysed reaction is [protein]-peptidylproline (omega=180) = [protein]-peptidylproline (omega=0). Involved in protein export. Acts as a chaperone by maintaining the newly synthesized protein in an open conformation. Functions as a peptidyl-prolyl cis-trans isomerase. The sequence is that of Trigger factor from Edwardsiella ictaluri (strain 93-146).